A 503-amino-acid chain; its full sequence is Na(+)-translocating NADH-quinone reductase subunit B (503 aa).

The next 5 membrane-spanning stretches (helical) occupy residues 55–75, 85–105, 120–142, 161–181, and 186–206; these read MMLV…NSGL, PQIM…SFVS, IFLP…FAII, ILPP…GVVI, and FGGT…FLFF. An FMN phosphoryl threonine modification is found at Thr248. The next 5 membrane-spanning stretches (helical) occupy residues 361–381, 387–407, 417–437, 452–472, and 475–495; these read TSTV…IASW, FGLS…LAAG, FFIP…LVFM, WFYG…NPAY, and GVML…RIAL.

It belongs to the NqrB/RnfD family. In terms of assembly, composed of six subunits; NqrA, NqrB, NqrC, NqrD, NqrE and NqrF. The cofactor is FMN.

It is found in the cell inner membrane. It catalyses the reaction a ubiquinone + n Na(+)(in) + NADH + H(+) = a ubiquinol + n Na(+)(out) + NAD(+). Functionally, NQR complex catalyzes the reduction of ubiquinone-1 to ubiquinol by two successive reactions, coupled with the transport of Na(+) ions from the cytoplasm to the periplasm. NqrA to NqrE are probably involved in the second step, the conversion of ubisemiquinone to ubiquinol. This is Na(+)-translocating NADH-quinone reductase subunit B from Chlamydia muridarum (strain MoPn / Nigg).